The primary structure comprises 96 residues: Acetolactate synthase isozyme 1 small subunit (96 aa).

The 74-residue stretch at 10–83 (ILELTVRNHP…DVVKVQRNQS (74 aa)) folds into the ACT domain.

It belongs to the acetolactate synthase small subunit family. Dimer of large and small chains.

It catalyses the reaction 2 pyruvate + H(+) = (2S)-2-acetolactate + CO2. It participates in amino-acid biosynthesis; L-isoleucine biosynthesis; L-isoleucine from 2-oxobutanoate: step 1/4. Its pathway is amino-acid biosynthesis; L-valine biosynthesis; L-valine from pyruvate: step 1/4. This is Acetolactate synthase isozyme 1 small subunit (ilvN) from Escherichia coli O157:H7.